Here is a 205-residue protein sequence, read N- to C-terminus: MIGIVIPIKRLHLAKSRLIDLLDPADRQQLVVTMVRHVITTARQAVSYLSIPARIWLVSPEPTLATDSEGIEWLPDNQEELNAALTEARQRIQAAGVQIMMVLAGDLPFVTVRDLILLSEALTDNDVVVAPDQHGQGTNALGLHLPSQLPFGFGPDSAGYHLRTAARLGLRASLISTPTLAFDLDDGERLQQYYRCIASCDNFAR.

Residues T138, G154, and S157 each contribute to the phosphoenolpyruvate site.

Belongs to the CofC family.

It catalyses the reaction phosphoenolpyruvate + GTP + H(+) = enolpyruvoyl-2-diphospho-5'-guanosine + diphosphate. It participates in cofactor biosynthesis; coenzyme F420 biosynthesis. Functionally, guanylyltransferase that catalyzes the activation of phosphoenolpyruvate (PEP) as enolpyruvoyl-2-diphospho-5'-guanosine, via the condensation of PEP with GTP. It is involved in the biosynthesis of coenzyme F420, a hydride carrier cofactor. This is Phosphoenolpyruvate guanylyltransferase from Chloroflexus aurantiacus (strain ATCC 29364 / DSM 637 / Y-400-fl).